The following is a 405-amino-acid chain: S-adenosylmethionine synthase (405 aa).

141 to 146 (GQGSVD) is a binding site for ATP.

This sequence belongs to the AdoMet synthase 2 family. Mg(2+) is required as a cofactor.

It catalyses the reaction L-methionine + ATP + H2O = S-adenosyl-L-methionine + phosphate + diphosphate. It functions in the pathway amino-acid biosynthesis; S-adenosyl-L-methionine biosynthesis; S-adenosyl-L-methionine from L-methionine: step 1/1. In terms of biological role, catalyzes the formation of S-adenosylmethionine from methionine and ATP. The chain is S-adenosylmethionine synthase from Methanococcus maripaludis (strain C5 / ATCC BAA-1333).